The chain runs to 281 residues: Clc-like protein 5 (281 aa).

The next 4 helical transmembrane spans lie at 13 to 33 (LATL…TITP), 104 to 124 (VLIL…AVIF), 137 to 157 (IMLD…LIVF), and 184 to 204 (YYLA…AALV).

It belongs to the Clc family.

It localises to the membrane. This Caenorhabditis elegans protein is Clc-like protein 5 (clc-5).